Reading from the N-terminus, the 2089-residue chain is Rho GTPase-activating protein 32 (2089 aa).

The tract at residues 24-52 (TQLTDGDEEEREESFRKMKSSIHSEEDDF) is disordered. A PX; atypical domain is found at 131–245 (GSIQLSLSEE…LTWMEIDNKG (115 aa)). The SH3 domain occupies 259 to 321 (PAVGAAHVIK…PGHCVELINQ (63 aa)). One can recognise a Rho-GAP domain in the interval 372-567 (CDLGEHLLNS…FILNHVDVLF (196 aa)). S706, S709, S732, and S738 each carry phosphoserine. Residues 828 to 837 (KLSPSKKDAE) show a composition bias toward basic and acidic residues. Residues 828–858 (KLSPSKKDAEAGGSQSQTPGSTASSEPVSPV) form a disordered region. The segment covering 840 to 854 (GSQSQTPGSTASSEP) has biased composition (polar residues). Phosphoserine occurs at positions 852, 856, 892, and 952. Disordered regions lie at residues 955 to 1037 (QLQL…PPPP), 1119 to 1141 (CNQPLPEAAAMGGPTQSNTTDSG), and 1154 to 1197 (LHRN…SVST). Polar residues-rich tracts occupy residues 998-1014 (LSSQSKAVPSGQSQTGA) and 1132-1141 (PTQSNTTDSG). Residues 1175–1191 (DSEKSDDHGSFPEDHAG) show a composition bias toward basic and acidic residues. Position 1206 is a phosphoserine (S1206). The interval 1221–1368 (GTSVDKPHHS…GDPAPIFLSD (148 aa)) is disordered. Basic and acidic residues predominate over residues 1225-1235 (DKPHHSSELTD). A compositionally biased stretch (low complexity) spans 1262–1275 (TATMAYMMATPARA). Residues 1395–1714 (RAPPLHLRAE…YNYAGLPPRP (320 aa)) form an interaction with GAB2 region. Residues R1526 and R1536 each carry the asymmetric dimethylarginine modification. Position 1588 is a phosphoserine (S1588). Positions 1688-2089 (SSRDFAFYNP…PHPDTQIHAE (402 aa)) are interaction with FYN. Disordered stretches follow at residues 1801-1865 (PGKT…QSSL) and 1881-2002 (RAHQ…LERD). Basic and acidic residues predominate over residues 1826-1841 (GDERFYRKHPESEFDR). Residues 1850–1865 (STQAEKPSLPQKQSSL) are compositionally biased toward polar residues. Residues 1881–1892 (RAHQEASHRQLC) are compositionally biased toward basic and acidic residues. Residues 1918–1939 (SEPSNYHNSGKYMTSGQGSLTL) are compositionally biased toward polar residues. 2 stretches are compositionally biased toward basic and acidic residues: residues 1940-1954 (NHKEVRLPKDLDRPR) and 1961-1975 (PEKHSRDCYKEEEHF). An Omega-N-methylarginine modification is found at R2039.

The protein belongs to the PX domain-containing GAP family. As to quaternary structure, interacts with NTRK1 (via cytoplasmic domain); the interaction is independent of the phosphorylation state of NTRK1. Interacts with SHC3 (via SH2 domain). Interacts with RASA1 (via SH3 domain); the interaction is necessary for the Ras activation and cell transforming activities of ARHGAP32. Interacts with GAB1 and GAB2. Interacts with CRK and CRKL. Found in a complex with CRKL and BCAR1; upon EGF stimulation BCAR1 may be replaced by EGFR. Interacts with NCK1 (via SH3 domain); NCK1 recruits phosphorylated BCAR1 to the complex. Isoform 2 interacts with FYN; the interaction appears to be dependent on tyrosine phosphorylation of ARHGAP32. Interacts with EGFR; the interaction requires EGF stimulation and is increased by SHC3. Interacts with CDC42; the interaction requires constitutively active CDC42. Interacts with CTNNB1, DLG4, CDH2 and GRIN2B. Interacts with GPHN. In terms of processing, isoform 2 is phosphorylated on multiple tyrosine residues by FYN. Phosphorylated tyrosine residues undergo dephosphorylation after stimulation of NMDA receptors. Phosphorylated in vitro by CaMK2 in the presence of calmodulin and calcium; which inhibits GAP activity. As to expression, isoform 1 and isoform 2 are highly expressed in brain, specially in cortex, corpus striatum, hippocampus and thalamus. Low levels in cerebellum, colon, small intestine, and kidney.

The protein resides in the postsynaptic density. It is found in the cell projection. Its subcellular location is the dendritic spine. It localises to the cytoplasm. The protein localises to the cell cortex. The protein resides in the endosome membrane. It is found in the golgi apparatus membrane. Its subcellular location is the endoplasmic reticulum membrane. It localises to the membrane. Its function is as follows. GTPase-activating protein (GAP) promoting GTP hydrolysis on RHOA, CDC42 and RAC1 small GTPases. May be involved in the differentiation of neuronal cells during the formation of neurite extensions. Involved in NMDA receptor activity-dependent actin reorganization in dendritic spines. May mediate cross-talks between Ras- and Rho-regulated signaling pathways in cell growth regulation. Isoform 2 has higher GAP activity. In Mus musculus (Mouse), this protein is Rho GTPase-activating protein 32 (Arhgap32).